The following is an 860-amino-acid chain: Leucine--tRNA ligase (860 aa).

A 'HIGH' region motif is present at residues 42 to 52; that stretch reads PYPSGRLHMGH. The 'KMSKS' region motif lies at 619 to 623; it reads KMSKS. Lysine 622 provides a ligand contact to ATP.

It belongs to the class-I aminoacyl-tRNA synthetase family.

It localises to the cytoplasm. It carries out the reaction tRNA(Leu) + L-leucine + ATP = L-leucyl-tRNA(Leu) + AMP + diphosphate. This chain is Leucine--tRNA ligase, found in Yersinia enterocolitica serotype O:8 / biotype 1B (strain NCTC 13174 / 8081).